The sequence spans 338 residues: Fructose-1,6-bisphosphatase class 1 (338 aa).

4 residues coordinate Mg(2+): glutamate 92, aspartate 113, leucine 115, and aspartate 116. Residues 116-119 (DGSS), asparagine 208, and lysine 274 each bind substrate. Glutamate 280 contacts Mg(2+).

This sequence belongs to the FBPase class 1 family. As to quaternary structure, homotetramer. Mg(2+) is required as a cofactor.

It is found in the cytoplasm. It catalyses the reaction beta-D-fructose 1,6-bisphosphate + H2O = beta-D-fructose 6-phosphate + phosphate. Its pathway is carbohydrate biosynthesis; gluconeogenesis. In Paramagnetospirillum magneticum (strain ATCC 700264 / AMB-1) (Magnetospirillum magneticum), this protein is Fructose-1,6-bisphosphatase class 1.